The following is a 401-amino-acid chain: Enolase (401 aa).

Q154 provides a ligand contact to (2R)-2-phosphoglycerate. Residue E197 is the Proton donor of the active site. Residues D233, E274, and D301 each contribute to the Mg(2+) site. Residues K326, R355, S356, and K377 each coordinate (2R)-2-phosphoglycerate. K326 serves as the catalytic Proton acceptor.

Belongs to the enolase family. It depends on Mg(2+) as a cofactor.

Its subcellular location is the cytoplasm. The protein localises to the secreted. It localises to the cell surface. It carries out the reaction (2R)-2-phosphoglycerate = phosphoenolpyruvate + H2O. It functions in the pathway carbohydrate degradation; glycolysis; pyruvate from D-glyceraldehyde 3-phosphate: step 4/5. Functionally, catalyzes the reversible conversion of 2-phosphoglycerate (2-PG) into phosphoenolpyruvate (PEP). It is essential for the degradation of carbohydrates via glycolysis. The chain is Enolase from Thermoplasma acidophilum (strain ATCC 25905 / DSM 1728 / JCM 9062 / NBRC 15155 / AMRC-C165).